Reading from the N-terminus, the 96-residue chain is UPF0213 protein BCE33L0031 (96 aa).

The region spanning 4-79 (NKHCFYVVEC…KQLNRKQKEE (76 aa)) is the GIY-YIG domain.

Belongs to the UPF0213 family.

The polypeptide is UPF0213 protein BCE33L0031 (Bacillus cereus (strain ZK / E33L)).